The chain runs to 250 residues: MIKKTNKISYDEVPYPPFTFSHTYPPYLRTIGKLFGLNPPPLETAKILDIGCGVGVNLLNFAETYPKSQSLGVDLSKTQIEIGKKTISDAKIKNVRLKALSILDLDESYGKFDYIVCHGVYSWVSKEVQDKILEVLNKLLNPNGIAFISYNTLPGWNMQNTIREMMMFHSESFNTSHDKLQQSKLLLKFINDSLENSTTPYANFLREEAKLISTYADSYVLHEYLGEINTGTYFHQFIEKAQKKPFKLLR.

This is an uncharacterized protein from Rickettsia prowazekii (strain Madrid E).